The sequence spans 139 residues: Holo-[acyl-carrier-protein] synthase (139 aa).

Mg(2+) contacts are provided by D9 and E63.

The protein belongs to the P-Pant transferase superfamily. AcpS family. The cofactor is Mg(2+).

It is found in the cytoplasm. The enzyme catalyses apo-[ACP] + CoA = holo-[ACP] + adenosine 3',5'-bisphosphate + H(+). In terms of biological role, transfers the 4'-phosphopantetheine moiety from coenzyme A to a Ser of acyl-carrier-protein. This is Holo-[acyl-carrier-protein] synthase from Wigglesworthia glossinidia brevipalpis.